We begin with the raw amino-acid sequence, 642 residues long: Threonine--tRNA ligase (642 aa).

In terms of domain architecture, TGS spans 1–61 (MPIITLPDGS…STDSDLSIIT (61 aa)). Residues 243–534 (DHRKIGKQLD…LIEEYAGKFP (292 aa)) form a catalytic region. Cysteine 334, histidine 385, and histidine 511 together coordinate Zn(2+).

The protein belongs to the class-II aminoacyl-tRNA synthetase family. In terms of assembly, homodimer. Requires Zn(2+) as cofactor.

It localises to the cytoplasm. The catalysed reaction is tRNA(Thr) + L-threonine + ATP = L-threonyl-tRNA(Thr) + AMP + diphosphate + H(+). Functionally, catalyzes the attachment of threonine to tRNA(Thr) in a two-step reaction: L-threonine is first activated by ATP to form Thr-AMP and then transferred to the acceptor end of tRNA(Thr). Also edits incorrectly charged L-seryl-tRNA(Thr). The polypeptide is Threonine--tRNA ligase (Shewanella denitrificans (strain OS217 / ATCC BAA-1090 / DSM 15013)).